The primary structure comprises 480 residues: Glutamate--tRNA ligase (480 aa).

A 'HIGH' region motif is present at residues 21–31 (PSPTGYLHVGG). Residues Cys110, Cys112, Cys137, and His139 each coordinate Zn(2+). A 'KMSKS' region motif is present at residues 248–252 (KLSKR). Position 251 (Lys251) interacts with ATP.

It belongs to the class-I aminoacyl-tRNA synthetase family. Glutamate--tRNA ligase type 1 subfamily. In terms of assembly, monomer. Requires Zn(2+) as cofactor.

It localises to the cytoplasm. The enzyme catalyses tRNA(Glu) + L-glutamate + ATP = L-glutamyl-tRNA(Glu) + AMP + diphosphate. In terms of biological role, catalyzes the attachment of glutamate to tRNA(Glu) in a two-step reaction: glutamate is first activated by ATP to form Glu-AMP and then transferred to the acceptor end of tRNA(Glu). In Haemophilus influenzae (strain ATCC 51907 / DSM 11121 / KW20 / Rd), this protein is Glutamate--tRNA ligase.